A 216-amino-acid polypeptide reads, in one-letter code: ATP phosphoribosyltransferase (216 aa).

It belongs to the ATP phosphoribosyltransferase family. Short subfamily. In terms of assembly, heteromultimer composed of HisG and HisZ subunits.

Its subcellular location is the cytoplasm. The catalysed reaction is 1-(5-phospho-beta-D-ribosyl)-ATP + diphosphate = 5-phospho-alpha-D-ribose 1-diphosphate + ATP. It participates in amino-acid biosynthesis; L-histidine biosynthesis; L-histidine from 5-phospho-alpha-D-ribose 1-diphosphate: step 1/9. Functionally, catalyzes the condensation of ATP and 5-phosphoribose 1-diphosphate to form N'-(5'-phosphoribosyl)-ATP (PR-ATP). Has a crucial role in the pathway because the rate of histidine biosynthesis seems to be controlled primarily by regulation of HisG enzymatic activity. This Prochlorococcus marinus (strain MIT 9211) protein is ATP phosphoribosyltransferase.